Consider the following 89-residue polypeptide: Small ribosomal subunit protein uS15 (89 aa).

It belongs to the universal ribosomal protein uS15 family. Part of the 30S ribosomal subunit. Forms a bridge to the 50S subunit in the 70S ribosome, contacting the 23S rRNA.

One of the primary rRNA binding proteins, it binds directly to 16S rRNA where it helps nucleate assembly of the platform of the 30S subunit by binding and bridging several RNA helices of the 16S rRNA. In terms of biological role, forms an intersubunit bridge (bridge B4) with the 23S rRNA of the 50S subunit in the ribosome. The protein is Small ribosomal subunit protein uS15 of Laribacter hongkongensis (strain HLHK9).